Here is a 259-residue protein sequence, read N- to C-terminus: Ribosomal RNA small subunit methyltransferase A (259 aa).

Residues Asn-13, Leu-15, Gly-39, Glu-60, Asp-84, and Asn-101 each coordinate S-adenosyl-L-methionine.

Belongs to the class I-like SAM-binding methyltransferase superfamily. rRNA adenine N(6)-methyltransferase family. RsmA subfamily.

It is found in the cytoplasm. The catalysed reaction is adenosine(1518)/adenosine(1519) in 16S rRNA + 4 S-adenosyl-L-methionine = N(6)-dimethyladenosine(1518)/N(6)-dimethyladenosine(1519) in 16S rRNA + 4 S-adenosyl-L-homocysteine + 4 H(+). Functionally, specifically dimethylates two adjacent adenosines (A1518 and A1519) in the loop of a conserved hairpin near the 3'-end of 16S rRNA in the 30S particle. May play a critical role in biogenesis of 30S subunits. The protein is Ribosomal RNA small subunit methyltransferase A of Mesomycoplasma hyopneumoniae (strain J / ATCC 25934 / NCTC 10110) (Mycoplasma hyopneumoniae).